The sequence spans 204 residues: Flavin-dependent thymidylate synthase (204 aa).

Residues 1 to 204 enclose the ThyX domain; that stretch reads MTVTLMQHTS…RYLFCLNQEG (204 aa). FAD is bound by residues serine 50 and 74–76; that span reads RHR. DUMP is bound by residues 71-74, 84-86, and lysine 143; these read ELAR and SSR. Residues 74–84 carry the ThyX motif motif; the sequence is RHRIASLSVKS. FAD is bound by residues 159-161 and asparagine 165; that span reads NAR. Residue arginine 170 participates in dUMP binding. Arginine 170 acts as the Involved in ionization of N3 of dUMP, leading to its activation in catalysis.

This sequence belongs to the thymidylate synthase ThyX family. As to quaternary structure, homotetramer. FAD is required as a cofactor.

The enzyme catalyses dUMP + (6R)-5,10-methylene-5,6,7,8-tetrahydrofolate + NADPH + H(+) = dTMP + (6S)-5,6,7,8-tetrahydrofolate + NADP(+). Its pathway is pyrimidine metabolism; dTTP biosynthesis. Catalyzes the reductive methylation of 2'-deoxyuridine-5'-monophosphate (dUMP) to 2'-deoxythymidine-5'-monophosphate (dTMP) while utilizing 5,10-methylenetetrahydrofolate (mTHF) as the methyl donor, and NADPH and FADH(2) as the reductant. In Wolinella succinogenes (strain ATCC 29543 / DSM 1740 / CCUG 13145 / JCM 31913 / LMG 7466 / NCTC 11488 / FDC 602W) (Vibrio succinogenes), this protein is Flavin-dependent thymidylate synthase.